A 641-amino-acid chain; its full sequence is 1-deoxy-D-xylulose-5-phosphate synthase (641 aa).

Residues His79 and 120–122 each bind thiamine diphosphate; that span reads GHS. Position 151 (Asp151) interacts with Mg(2+). Residues 152–153, Asn180, Tyr290, and Glu372 contribute to the thiamine diphosphate site; that span reads GS. Asn180 provides a ligand contact to Mg(2+).

This sequence belongs to the transketolase family. DXPS subfamily. In terms of assembly, homodimer. Mg(2+) is required as a cofactor. Thiamine diphosphate serves as cofactor.

It carries out the reaction D-glyceraldehyde 3-phosphate + pyruvate + H(+) = 1-deoxy-D-xylulose 5-phosphate + CO2. The protein operates within metabolic intermediate biosynthesis; 1-deoxy-D-xylulose 5-phosphate biosynthesis; 1-deoxy-D-xylulose 5-phosphate from D-glyceraldehyde 3-phosphate and pyruvate: step 1/1. Its function is as follows. Catalyzes the acyloin condensation reaction between C atoms 2 and 3 of pyruvate and glyceraldehyde 3-phosphate to yield 1-deoxy-D-xylulose-5-phosphate (DXP). This Rhodopseudomonas palustris (strain TIE-1) protein is 1-deoxy-D-xylulose-5-phosphate synthase.